Consider the following 355-residue polypeptide: NADH-quinone oxidoreductase subunit H (355 aa).

Helical transmembrane passes span 25–45 (VVRI…LILW), 91–111 (WLYL…WAVI), 126–146 (LLYA…AGWA), 170–190 (MGFA…SEIV), 205–225 (FLSW…ISGI), 253–273 (MAFA…SALA), 290–310 (FIPG…VFIW), and 330–350 (VFLP…MSPL).

It belongs to the complex I subunit 1 family. As to quaternary structure, NDH-1 is composed of 14 different subunits. Subunits NuoA, H, J, K, L, M, N constitute the membrane sector of the complex.

It is found in the cell inner membrane. It catalyses the reaction a quinone + NADH + 5 H(+)(in) = a quinol + NAD(+) + 4 H(+)(out). NDH-1 shuttles electrons from NADH, via FMN and iron-sulfur (Fe-S) centers, to quinones in the respiratory chain. The immediate electron acceptor for the enzyme in this species is believed to be ubiquinone. Couples the redox reaction to proton translocation (for every two electrons transferred, four hydrogen ions are translocated across the cytoplasmic membrane), and thus conserves the redox energy in a proton gradient. This subunit may bind ubiquinone. This chain is NADH-quinone oxidoreductase subunit H, found in Burkholderia cenocepacia (strain HI2424).